We begin with the raw amino-acid sequence, 274 residues long: Syntaxin-12 (274 aa).

Positions 1 to 20 are disordered; sequence MSYGPLDMYRNPGPSGPQPR. Position 2 is an N-acetylserine (Ser-2). The Cytoplasmic segment spans residues 2 to 250; the sequence is SYGPLDMYRN…AYYQKKSRKK (249 aa). Residues 34 to 80 adopt a coiled-coil conformation; it reads QRISQATAQIKNLMSQLGTKQDSSKLQENLQQFQHSTNQLAKETNEL. Positions 128–150 are disordered; that stretch reads EKESIARARAGSRLSAEDRQREE. A phosphoserine mark is found at Ser-139, Ser-142, Ser-218, and Ser-225. The t-SNARE coiled-coil homology domain occupies 178-240; it reads LELIKERETA…ERASDQLQRA (63 aa). A helical; Anchor for type IV membrane protein transmembrane segment spans residues 251–271; that stretch reads MCILVLVLSVIVTVLVVVIWV. The Vesicular segment spans residues 272-274; it reads ASK.

It belongs to the syntaxin family. As to quaternary structure, associates with the BLOC-1 complex. Interacts with BLOC1S6. Interacts with NAPA and SNAP23. Identified in a complex containing STX6, STX12, VAMP4 and VTI1A. Interacts with GRIPAP1. Forms a complex with GRIP1, GRIA2 and NSG1; controls the intracellular fate of AMPAR and the endosomal sorting of the GRIA2 subunit toward recycling and membrane targeting. Interacts with NSG1. Interacts with TPC1. Interacts (via N-terminus) with VPS13B. Ubiquitous. Highly expressed in brain.

It is found in the endosome membrane. It localises to the golgi apparatus membrane. Its subcellular location is the endomembrane system. The protein resides in the early endosome membrane. The protein localises to the recycling endosome membrane. Its function is as follows. SNARE promoting fusion of transport vesicles with target membranes. Together with SNARE STX6, promotes movement of vesicles from endosomes to the cell membrane, and may therefore function in the endocytic recycling pathway. Through complex formation with GRIP1, GRIA2 and NSG1 controls the intracellular fate of AMPAR and the endosomal sorting of the GRIA2 subunit toward recycling and membrane targeting. This Rattus norvegicus (Rat) protein is Syntaxin-12 (Stx12).